The sequence spans 517 residues: Cytochrome b mRNA maturase bI3 (517 aa).

At methionine 1–asparagine 31 the chain is on the mitochondrial matrix side. A cytochrome b region spans residues methionine 1 to phenylalanine 169. Residues methionine 32–methionine 52 form a helical membrane-spanning segment. Topologically, residues histidine 53 to asparagine 84 are mitochondrial intermembrane. Residues glycine 85 to serine 105 form a helical membrane-spanning segment. Topologically, residues tyrosine 106–asparagine 115 are mitochondrial matrix. The chain crosses the membrane as a helical span at residues valine 116 to tyrosine 136. Residues glycine 137 to threonine 145 are Mitochondrial intermembrane-facing. The helical transmembrane segment at valine 146–tryptophan 166 threads the bilayer. Topologically, residues glycine 167–serine 184 are mitochondrial matrix. Residues asparagine 170–tyrosine 517 are maturase. A helical transmembrane segment spans residues valine 185–tyrosine 205. Residues asparagine 206–lysine 224 lie on the Mitochondrial intermembrane side of the membrane. The chain crosses the membrane as a helical span at residues leucine 225–tyrosine 242. Over serine 243–tyrosine 517 the chain is Mitochondrial matrix.

It in the N-terminal section; belongs to the cytochrome b family. The protein in the C-terminal section; belongs to the LAGLIDADG endonuclease family. Forms a ribonucleoprotein complex composed of maturase bI3 and 2 dimers of MRS1 that assemble around the bI3 RNA.

Its subcellular location is the mitochondrion inner membrane. Its function is as follows. Mitochondrial mRNA maturase required for splicing of intron 3 of the cytochrome b (COB) gene, containing its own coding sequence. In vivo splicing requires the formation of a ribonucleoprotein complex together with the imported mitochondrial RNA-splicing protein MRS1. The complex seems to stimulate the intrinsic ribozyme activity of intron bI3 through binding to and stabilizing specific secondary and tertiary structure elements in the RNA. This Saccharomyces cerevisiae (strain ATCC 204508 / S288c) (Baker's yeast) protein is Cytochrome b mRNA maturase bI3 (BI3).